Consider the following 328-residue polypeptide: Transcription initiation factor IIE subunit beta (328 aa).

Residues 32–105 are disordered; sequence QKKTNDTVIT…SSPSKKVRPG (74 aa). The residue at position 52 (S52) is a Phosphoserine. Residues 85–94 show a composition bias toward acidic residues; the sequence is LDDDDDDEDF. 2 positions are modified to phosphoserine: S97 and S106. The TFIIE beta DNA-binding region spans 113–187; sequence QANQTDISKS…FKYLSTYDVH (75 aa).

Belongs to the TFIIE beta subunit family. In terms of assembly, TFIIE is a tetramer of two alpha (TFA1) and two beta (TFA2) subunits.

Its subcellular location is the nucleus. Functionally, recruits TFIIH to the initiation complex and stimulates the RNA polymerase II C-terminal domain kinase and DNA-dependent ATPase activities of TFIIH. Both TFIIH and TFIIE are required for promoter clearance by RNA polymerase. This Saccharomyces cerevisiae (strain ATCC 204508 / S288c) (Baker's yeast) protein is Transcription initiation factor IIE subunit beta (TFA2).